A 404-amino-acid chain; its full sequence is D-galactonate dehydratase family member Ent638_1932 (404 aa).

Residues asparagine 37 and histidine 122 each contribute to the substrate site. Tyrosine 159 acts as the Proton donor/acceptor in catalysis. Residue aspartate 212 coordinates Mg(2+). Residue histidine 214 is the Proton donor/acceptor of the active site. Glutamate 238 and glutamate 264 together coordinate Mg(2+). Positions 264, 285, 314, 318, and 341 each coordinate substrate.

This sequence belongs to the mandelate racemase/muconate lactonizing enzyme family. GalD subfamily. It depends on Mg(2+) as a cofactor.

The catalysed reaction is D-mannonate = 2-dehydro-3-deoxy-D-gluconate + H2O. Its function is as follows. Has low D-mannonate dehydratase activity (in vitro), suggesting that this is not a physiological substrate and that it has no significant role in D-mannonate degradation in vivo. Has no detectable activity with a panel of 70 other acid sugars (in vitro). This Enterobacter sp. (strain 638) protein is D-galactonate dehydratase family member Ent638_1932.